Reading from the N-terminus, the 583-residue chain is Sensor protein SrrB (583 aa).

Topologically, residues Met-1–Lys-11 are cytoplasmic. Residues Leu-12–Ile-32 traverse the membrane as a helical segment. Residues Thr-33 to Thr-174 are Extracellular-facing. The chain crosses the membrane as a helical span at residues Ile-175 to Leu-195. Residues Ser-196 to Glu-583 lie on the Cytoplasmic side of the membrane. Residues Ser-197 to Asp-249 form the HAMP domain. A Histidine kinase domain is found at Asn-366–Glu-583. A Phosphohistidine; by autocatalysis modification is found at His-369.

The protein localises to the cell membrane. The catalysed reaction is ATP + protein L-histidine = ADP + protein N-phospho-L-histidine.. Functionally, member of the two-component regulatory system SrrA/SrrB, which is involved in the global regulation of staphylococcal virulence factors in response to environmental oxygen levels as well as biofilm formation. Also plays an essential role in host-derived nitric oxide resistance by regulating hmp/flavohemoglobin, an enzyme that detoxifies nitric oxide by converting it to nitrate. Functions as a sensor protein kinase which is autophosphorylated at a histidine residue and transfers its phosphate group to SrrA. In turn, SrrA binds to the upstream promoter regions of the target genes to positively and negatively regulate their expression. In Staphylococcus aureus (strain MRSA252), this protein is Sensor protein SrrB (srrB).